A 188-amino-acid polypeptide reads, in one-letter code: dCTP deaminase (188 aa).

Residues 111–116, 135–137, Gln-156, Tyr-170, and Gln-180 each bind dCTP; these read KSTYAR and VLE. Catalysis depends on Glu-137, which acts as the Proton donor/acceptor.

It belongs to the dCTP deaminase family. As to quaternary structure, homotrimer.

It catalyses the reaction dCTP + H2O + H(+) = dUTP + NH4(+). It participates in pyrimidine metabolism; dUMP biosynthesis; dUMP from dCTP (dUTP route): step 1/2. In terms of biological role, catalyzes the deamination of dCTP to dUTP. The chain is dCTP deaminase from Protochlamydia amoebophila (strain UWE25).